The sequence spans 206 residues: Thiamine-phosphate synthase (206 aa).

Residues 39-43 (QYREK) and asparagine 74 contribute to the 4-amino-2-methyl-5-(diphosphooxymethyl)pyrimidine site. Aspartate 75 and aspartate 94 together coordinate Mg(2+). Serine 112 contacts 4-amino-2-methyl-5-(diphosphooxymethyl)pyrimidine. 138–140 (TNT) serves as a coordination point for 2-[(2R,5Z)-2-carboxy-4-methylthiazol-5(2H)-ylidene]ethyl phosphate. Lysine 141 is a binding site for 4-amino-2-methyl-5-(diphosphooxymethyl)pyrimidine. Residues glycine 170 and 190–191 (IS) each bind 2-[(2R,5Z)-2-carboxy-4-methylthiazol-5(2H)-ylidene]ethyl phosphate.

This sequence belongs to the thiamine-phosphate synthase family. The cofactor is Mg(2+).

It catalyses the reaction 2-[(2R,5Z)-2-carboxy-4-methylthiazol-5(2H)-ylidene]ethyl phosphate + 4-amino-2-methyl-5-(diphosphooxymethyl)pyrimidine + 2 H(+) = thiamine phosphate + CO2 + diphosphate. The catalysed reaction is 2-(2-carboxy-4-methylthiazol-5-yl)ethyl phosphate + 4-amino-2-methyl-5-(diphosphooxymethyl)pyrimidine + 2 H(+) = thiamine phosphate + CO2 + diphosphate. The enzyme catalyses 4-methyl-5-(2-phosphooxyethyl)-thiazole + 4-amino-2-methyl-5-(diphosphooxymethyl)pyrimidine + H(+) = thiamine phosphate + diphosphate. The protein operates within cofactor biosynthesis; thiamine diphosphate biosynthesis; thiamine phosphate from 4-amino-2-methyl-5-diphosphomethylpyrimidine and 4-methyl-5-(2-phosphoethyl)-thiazole: step 1/1. Its function is as follows. Condenses 4-methyl-5-(beta-hydroxyethyl)thiazole monophosphate (THZ-P) and 2-methyl-4-amino-5-hydroxymethyl pyrimidine pyrophosphate (HMP-PP) to form thiamine monophosphate (TMP). The sequence is that of Thiamine-phosphate synthase from Oceanobacillus iheyensis (strain DSM 14371 / CIP 107618 / JCM 11309 / KCTC 3954 / HTE831).